We begin with the raw amino-acid sequence, 424 residues long: Calreticulin-3 (424 aa).

Residues 1-28 form the signal peptide; sequence MGLPQNKLSFFCFFFLVSVLTLAPLAFS. An N-linked (GlcNAc...) asparagine glycan is attached at asparagine 97. Cysteine 114 and cysteine 146 form a disulfide bridge. An alpha-D-glucoside contacts are provided by tyrosine 118, lysine 120, tyrosine 137, and aspartate 144. A run of 7 repeats spans residues 200-211, 219-230, 236-247, 254-265, 269-279, 283-293, and 297-307. Positions 200–265 are 4 X approximate repeats; it reads REFGSMYTDW…KAKEPEDWDE (66 aa). Positions 228–237 are enriched in acidic residues; sequence WDDREYIDDP. The segment at 228 to 275 is disordered; sequence WDDREYIDDPNDVKPEGFDSIPREIPDRKAKEPEDWDEEENGLWEPPK. The segment covering 238-260 has biased composition (basic and acidic residues); sequence NDVKPEGFDSIPREIPDRKAKEP. The tract at residues 269-307 is 3 X approximate repeats; the sequence is GLWEPPKIPNSAYKGPWKAKRIKNPNYKGKWKNPWIDNP. Residue glutamate 327 participates in an alpha-D-glucoside binding. Residues 368–401 show a composition bias toward basic and acidic residues; sequence FAEAEKERKAREDEEARIAREEGERRRKERDHRY. A disordered region spans residues 368-424; that stretch reads FAEAEKERKAREDEEARIAREEGERRRKERDHRYGDRRRRYKRPNPRDYMDDYHDEL. Basic residues predominate over residues 402–411; that stretch reads GDRRRRYKRP. Residues 412 to 424 are compositionally biased toward basic and acidic residues; the sequence is NPRDYMDDYHDEL. The Prevents secretion from ER signature appears at 421–424; that stretch reads HDEL.

The protein belongs to the calreticulin family.

The protein resides in the endoplasmic reticulum lumen. Functionally, molecular calcium-binding chaperone promoting folding, oligomeric assembly and quality control in the ER via the calreticulin/calnexin cycle. This lectin may interact transiently with almost all of the monoglucosylated glycoproteins that are synthesized in the ER. Required for elongation factor Tu receptor (EFR) accumulation and for EFR, but not flagellin-sensing 2 (FLS2) signaling. The protein is Calreticulin-3 (CRT3) of Arabidopsis thaliana (Mouse-ear cress).